Here is a 685-residue protein sequence, read N- to C-terminus: uncharacterized protein (685 aa).

Disordered stretches follow at residues 502–538 (NLNQ…SLNK) and 635–685 (RSKR…IHNA). The segment covering 518–538 (SSENMTKFPSSRGKSTVSLNK) has biased composition (polar residues). A compositionally biased stretch (basic residues) spans 675–685 (KLKKSLIIHNA).

This is an uncharacterized protein from Homo sapiens (Human).